A 459-amino-acid polypeptide reads, in one-letter code: MVLTQKNLVKRTTESTETEAVSDLLVSELLILGLSLPALLRPFSRQSRKISAIPLLPVLALSVGALTVLGQGLTLDLTLSLVSSSVVCLTELPRLVAFSQGIPNDLYSAGARIARVLLLVAGVFTLVIVCLCAPEPGYRPSRSVVRSSFSLRLGNTKVNAGLLLSLANPYETSHLDNPSAPHPSENPQSRAHPKQNPVGVNVVVLKNTPQSAHRAHPETLELMLAERGYTVFVPYQDAYSPSYSAASLAAPMRTSPGVVLLSSALRGVPFDVPTPYVSRRANTIDAATFEDAHVPALFPALFALCRHAPTFVYAESAHEVMLSRFLQQQPHACAGVFFVLPDSAARGPHHAPAVQGAPPPVDTAGVASAVRGASRTLPAVYRQYVHAAEAAWAELASTDILAAYLAGLPRDRHRTRLQARATQVDQWIRAQLHLSEPVLPHAQALSHHTVHAGGTYDRT.

2 helical membrane-spanning segments follow: residues 53 to 75 (IPLL…GLTL) and 111 to 133 (ARIA…CLCA). Residues 174-196 (HLDNPSAPHPSENPQSRAHPKQN) are disordered.

It is found in the cell membrane. This is an uncharacterized protein from Treponema pallidum (strain Nichols).